The sequence spans 109 residues: MSQEIAVVGSPEFTTGFRLAGVRKFENIPDDEKDERLDDAVERTLDDEGTGIIVMHTDDLDHLSRGTREAVEGSIEPVLVTLGGSGAGSGGLRDQIKRAIGIDLMEEDD.

Belongs to the V-ATPase F subunit family. In terms of assembly, has multiple subunits with at least A(3), B(3), C, D, E, F, H, I and proteolipid K(x).

It is found in the cell membrane. In terms of biological role, component of the A-type ATP synthase that produces ATP from ADP in the presence of a proton gradient across the membrane. In Halorubrum lacusprofundi (strain ATCC 49239 / DSM 5036 / JCM 8891 / ACAM 34), this protein is A-type ATP synthase subunit F.